We begin with the raw amino-acid sequence, 330 residues long: Tryptophan--tRNA ligase (330 aa).

Residues glutamine 6–threonine 8 and glycine 14–asparagine 15 each bind ATP. The 'HIGH' region motif lies at proline 7–asparagine 15. An L-tryptophan-binding site is contributed by aspartate 130. ATP contacts are provided by residues glycine 142–aspartate 144, valine 185, and lysine 194–serine 198. Residues lysine 194–serine 198 carry the 'KMSKS' region motif.

Belongs to the class-I aminoacyl-tRNA synthetase family. Homodimer.

It is found in the cytoplasm. The enzyme catalyses tRNA(Trp) + L-tryptophan + ATP = L-tryptophyl-tRNA(Trp) + AMP + diphosphate + H(+). Its function is as follows. Catalyzes the attachment of tryptophan to tRNA(Trp). This Thermosynechococcus vestitus (strain NIES-2133 / IAM M-273 / BP-1) protein is Tryptophan--tRNA ligase.